The primary structure comprises 226 residues: Putative pyridoxamine 5'-phosphate oxidase (226 aa).

16–19 (LNSH) is a binding site for pyridoxal 5'-phosphate. 72–75 (RMVL) contacts FMN. A pyridoxal 5'-phosphate-binding site is contributed by Lys77. FMN-binding positions include 87–88 (YT), 93–94 (RK), and Gln116. Pyridoxal 5'-phosphate-binding residues include Tyr134, Arg138, and Ser142. Residues 151-152 (QS) and Trp199 each bind FMN. Residue 205–207 (RLH) coordinates pyridoxal 5'-phosphate. FMN is bound at residue Arg209.

The protein belongs to the pyridoxamine 5'-phosphate oxidase family. In terms of assembly, homodimer. It depends on FMN as a cofactor.

It catalyses the reaction pyridoxamine 5'-phosphate + O2 + H2O = pyridoxal 5'-phosphate + H2O2 + NH4(+). It carries out the reaction pyridoxine 5'-phosphate + O2 = pyridoxal 5'-phosphate + H2O2. Its pathway is cofactor metabolism; pyridoxal 5'-phosphate salvage; pyridoxal 5'-phosphate from pyridoxamine 5'-phosphate: step 1/1. It functions in the pathway cofactor metabolism; pyridoxal 5'-phosphate salvage; pyridoxal 5'-phosphate from pyridoxine 5'-phosphate: step 1/1. In terms of biological role, catalyzes the oxidation of either pyridoxine 5'-phosphate (PNP) or pyridoxamine 5'-phosphate (PMP) into pyridoxal 5'-phosphate (PLP). This is Putative pyridoxamine 5'-phosphate oxidase from Caenorhabditis elegans.